A 153-amino-acid chain; its full sequence is GVQKTVVEAPSTVSAEKMYGFLLDMDTVFPKVLPQLIGKSVEILEGDGSVGTVKLVHLGEATEYTTMKQRVDVIDKAGLAYTYTTIGGDILVEVLESVVNEFVVVPTDGGCIVKNTTIYNTKGDAVLPEDKVKEATEKSALAFKAVEAYLLAN.

The protein belongs to the BetVI family. As to quaternary structure, may form dimers.

In Petroselinum crispum (Parsley), this protein is Allergen Pet c 1.